The sequence spans 142 residues: Transcriptional regulator MraZ (142 aa).

SpoVT-AbrB domains lie at 5 to 51 (SSAL…PRPE) and 77 to 120 (AQDV…DAAS).

It belongs to the MraZ family. In terms of assembly, forms oligomers.

The protein resides in the cytoplasm. It is found in the nucleoid. In Bordetella bronchiseptica (strain ATCC BAA-588 / NCTC 13252 / RB50) (Alcaligenes bronchisepticus), this protein is Transcriptional regulator MraZ.